The primary structure comprises 436 residues: UPF0597 protein YhaM (436 aa).

The protein belongs to the UPF0597 family.

The chain is UPF0597 protein YhaM from Escherichia coli (strain K12 / MC4100 / BW2952).